A 99-amino-acid polypeptide reads, in one-letter code: DASH complex subunit DAD1 (99 aa).

A disordered region spans residues 69-99; the sequence is GMNHQTRENTRDENNKISSSDTEDENNNNKI. Residues 73–83 show a composition bias toward basic and acidic residues; sequence QTRENTRDENN. Residues 89–99 show a composition bias toward acidic residues; that stretch reads DTEDENNNNKI.

This sequence belongs to the DASH complex DAD1 family. As to quaternary structure, component of the DASH complex consisting of ASK1, DAD1, DAD2, DAD3, DAD4, DAM1, DUO1, HSK3, SPC19 and SPC34, with a stoichiometry of one copy of each subunit per complex. Multiple DASH complexes oligomerize to form a ring that encircles spindle microtubules and organizes the rod-like NDC80 complexes of the outer kinetochore. DASH complex oligomerization strengthens microtubule attachments. On cytoplasmic microtubules, DASH complexes appear to form patches instead of rings.

It is found in the chromosome. The protein localises to the centromere. The protein resides in the kinetochore. Its subcellular location is the cytoplasm. It localises to the cytoskeleton. It is found in the spindle. The protein localises to the nucleus. Component of the DASH complex that connects microtubules with kinetochores and couples microtubule depolymerisation to chromosome movement; it is involved in retrieving kinetochores to the spindle poles before their re-orientation on the spindle in early mitosis and allows microtubule depolymerization to pull chromosomes apart and resist detachment during anaphase. Kinetochores, consisting of a centromere-associated inner segment and a microtubule-contacting outer segment, play a crucial role in chromosome segregation by mediating the physical connection between centromeric DNA and microtubules. Kinetochores also serve as an input point for the spindle assembly checkpoint, which delays anaphase until all chromosomes have bioriented on the mitotic spindle. This is DASH complex subunit DAD1 from Candida albicans (strain SC5314 / ATCC MYA-2876) (Yeast).